The chain runs to 652 residues: DNA ligase (652 aa).

NAD(+) is bound by residues 29–33 (DSDYD), 78–79 (SL), and Glu107. Lys109 functions as the N6-AMP-lysine intermediate in the catalytic mechanism. Arg130, Glu164, Lys278, and Lys302 together coordinate NAD(+). Zn(2+)-binding residues include Cys395, Cys398, Cys413, and Cys418. The region spanning 577–652 (NSDAALFGLT…IEDEDWLRQL (76 aa)) is the BRCT domain.

The protein belongs to the NAD-dependent DNA ligase family. LigA subfamily. Mg(2+) is required as a cofactor. The cofactor is Mn(2+).

It catalyses the reaction NAD(+) + (deoxyribonucleotide)n-3'-hydroxyl + 5'-phospho-(deoxyribonucleotide)m = (deoxyribonucleotide)n+m + AMP + beta-nicotinamide D-nucleotide.. DNA ligase that catalyzes the formation of phosphodiester linkages between 5'-phosphoryl and 3'-hydroxyl groups in double-stranded DNA using NAD as a coenzyme and as the energy source for the reaction. It is essential for DNA replication and repair of damaged DNA. The protein is DNA ligase of Streptococcus pyogenes serotype M12 (strain MGAS2096).